A 213-amino-acid polypeptide reads, in one-letter code: Thiopurine S-methyltransferase (213 aa).

The S-adenosyl-L-methionine site is built by tryptophan 10, leucine 46, glutamate 67, and arginine 124.

Belongs to the class I-like SAM-binding methyltransferase superfamily. TPMT family.

It localises to the cytoplasm. The enzyme catalyses S-adenosyl-L-methionine + a thiopurine = S-adenosyl-L-homocysteine + a thiopurine S-methylether.. This Xanthobacter autotrophicus (strain ATCC BAA-1158 / Py2) protein is Thiopurine S-methyltransferase.